The primary structure comprises 557 residues: Dihydroxy-acid dehydratase (557 aa).

Position 78 (Asp78) interacts with Mg(2+). Cys119 contributes to the [2Fe-2S] cluster binding site. Mg(2+)-binding residues include Asp120 and Lys121. Lys121 carries the post-translational modification N6-carboxylysine. Cys192 provides a ligand contact to [2Fe-2S] cluster. Position 442 (Glu442) interacts with Mg(2+). Catalysis depends on Ser468, which acts as the Proton acceptor.

This sequence belongs to the IlvD/Edd family. In terms of assembly, homodimer. Requires [2Fe-2S] cluster as cofactor. Mg(2+) serves as cofactor.

The enzyme catalyses (2R)-2,3-dihydroxy-3-methylbutanoate = 3-methyl-2-oxobutanoate + H2O. It catalyses the reaction (2R,3R)-2,3-dihydroxy-3-methylpentanoate = (S)-3-methyl-2-oxopentanoate + H2O. It participates in amino-acid biosynthesis; L-isoleucine biosynthesis; L-isoleucine from 2-oxobutanoate: step 3/4. Its pathway is amino-acid biosynthesis; L-valine biosynthesis; L-valine from pyruvate: step 3/4. Functions in the biosynthesis of branched-chain amino acids. Catalyzes the dehydration of (2R,3R)-2,3-dihydroxy-3-methylpentanoate (2,3-dihydroxy-3-methylvalerate) into 2-oxo-3-methylpentanoate (2-oxo-3-methylvalerate) and of (2R)-2,3-dihydroxy-3-methylbutanoate (2,3-dihydroxyisovalerate) into 2-oxo-3-methylbutanoate (2-oxoisovalerate), the penultimate precursor to L-isoleucine and L-valine, respectively. This chain is Dihydroxy-acid dehydratase, found in Bacillus cereus (strain Q1).